The following is a 156-amino-acid chain: Putative increased recombination centers protein 11 (156 aa).

The chain crosses the membrane as a helical span at residues 20 to 42; sequence AALGATCLLHYLTTSLSIRFFFH.

Its subcellular location is the membrane. The chain is Putative increased recombination centers protein 11 (IRC11) from Saccharomyces cerevisiae (strain ATCC 204508 / S288c) (Baker's yeast).